A 491-amino-acid polypeptide reads, in one-letter code: Glutamyl-tRNA(Gln) amidotransferase subunit A (491 aa).

Active-site charge relay system residues include Lys78 and Ser158. The Acyl-ester intermediate role is filled by Ser182.

It belongs to the amidase family. GatA subfamily. Heterotrimer of A, B and C subunits.

It catalyses the reaction L-glutamyl-tRNA(Gln) + L-glutamine + ATP + H2O = L-glutaminyl-tRNA(Gln) + L-glutamate + ADP + phosphate + H(+). Allows the formation of correctly charged Gln-tRNA(Gln) through the transamidation of misacylated Glu-tRNA(Gln) in organisms which lack glutaminyl-tRNA synthetase. The reaction takes place in the presence of glutamine and ATP through an activated gamma-phospho-Glu-tRNA(Gln). This chain is Glutamyl-tRNA(Gln) amidotransferase subunit A, found in Afipia carboxidovorans (strain ATCC 49405 / DSM 1227 / KCTC 32145 / OM5) (Oligotropha carboxidovorans).